A 137-amino-acid chain; its full sequence is Protein phosphatase 1 regulatory subunit 1B (137 aa).

Residues 1–137 are disordered; that stretch reads DPKDRKKIQF…EEEEEEEDSQ (137 aa). The residue at position 33 (threonine 33) is a Phosphothreonine; by PKA. Residues 40–62 show a composition bias toward basic and acidic residues; the sequence is LXEHSSPEEEASPHQRAAGEGHH. 2 positions are modified to phosphoserine: serine 44 and serine 45. Position 74 is a phosphothreonine; by CDK5 (threonine 74). Residues 88 to 99 are compositionally biased toward polar residues; the sequence is HLQSISNLGENQ. Phosphoserine is present on serine 101. Residues 108 to 117 are compositionally biased toward basic and acidic residues; that stretch reads GELRELGYPR. Residues 118-137 are compositionally biased toward acidic residues; the sequence is EEEEEEEEDDEEEEEEEDSQ. Position 136 is a phosphoserine (serine 136).

It belongs to the protein phosphatase inhibitor 1 family. Post-translationally, phosphorylation of Thr-33 is required for activity. In terms of processing, dopamine- and cyclic AMP-regulated neuronal phosphoprotein.

It localises to the cytoplasm. Its function is as follows. Inhibitor of protein-phosphatase 1. This chain is Protein phosphatase 1 regulatory subunit 1B (PPP1R1B), found in Sus scrofa (Pig).